The sequence spans 320 residues: tRNA U34 carboxymethyltransferase (320 aa).

Residues K89, W103, K108, G127, 177-178 (LE), M193, Y197, and R312 contribute to the carboxy-S-adenosyl-L-methionine site.

This sequence belongs to the class I-like SAM-binding methyltransferase superfamily. CmoB family. As to quaternary structure, homotetramer.

The catalysed reaction is carboxy-S-adenosyl-L-methionine + 5-hydroxyuridine(34) in tRNA = 5-carboxymethoxyuridine(34) in tRNA + S-adenosyl-L-homocysteine + H(+). Catalyzes carboxymethyl transfer from carboxy-S-adenosyl-L-methionine (Cx-SAM) to 5-hydroxyuridine (ho5U) to form 5-carboxymethoxyuridine (cmo5U) at position 34 in tRNAs. The chain is tRNA U34 carboxymethyltransferase from Stutzerimonas stutzeri (strain A1501) (Pseudomonas stutzeri).